The sequence spans 236 residues: Adenosine 5'-phosphosulfate reductase 2 (236 aa).

Positions 122, 123, 205, and 208 each coordinate [4Fe-4S] cluster. The tract at residues 216 to 236 (NDERAGRWAGREKTECGLHQE) is disordered. C231 (nucleophile; cysteine thiosulfonate intermediate) is an active-site residue.

The protein belongs to the PAPS reductase family. CysH subfamily. [4Fe-4S] cluster is required as a cofactor.

It is found in the cytoplasm. The enzyme catalyses [thioredoxin]-disulfide + sulfite + AMP + 2 H(+) = adenosine 5'-phosphosulfate + [thioredoxin]-dithiol. Its pathway is sulfur metabolism; hydrogen sulfide biosynthesis; sulfite from sulfate. Its function is as follows. Catalyzes the formation of sulfite from adenosine 5'-phosphosulfate (APS) using thioredoxin as an electron donor. The protein is Adenosine 5'-phosphosulfate reductase 2 of Bacillus subtilis (strain 168).